Here is a 115-residue protein sequence, read N- to C-terminus: NADH-ubiquinone oxidoreductase chain 3 (115 aa).

Helical transmembrane passes span 3 to 23, 56 to 76, and 84 to 104; these read LILMMILISSLISTILAIVAF, FFLVAILFLLFDLEIALLLPL, and PTLMLMWAFTIIILLTIGLIY.

The protein belongs to the complex I subunit 3 family.

The protein resides in the mitochondrion membrane. It carries out the reaction a ubiquinone + NADH + 5 H(+)(in) = a ubiquinol + NAD(+) + 4 H(+)(out). Its function is as follows. Core subunit of the mitochondrial membrane respiratory chain NADH dehydrogenase (Complex I) that is believed to belong to the minimal assembly required for catalysis. Complex I functions in the transfer of electrons from NADH to the respiratory chain. The immediate electron acceptor for the enzyme is believed to be ubiquinone. The protein is NADH-ubiquinone oxidoreductase chain 3 (MT-ND3) of Polypterus ornatipinnis (Ornate bichir).